An 86-amino-acid chain; its full sequence is Mu-theraphotoxin-Cg2a 3 (86 aa).

An N-terminal signal peptide occupies residues M1–A21. The propeptide occupies A22–R50. Disulfide bonds link C52-C66, C59-C71, and C65-C78. Phenylalanine amide is present on F84.

It belongs to the neurotoxin 10 (Hwtx-1) family. 37 (Jztx-31) subfamily. In terms of tissue distribution, expressed by the venom gland.

It is found in the secreted. Inhibits both peak current and fast inactivation of voltage-gated sodium channels (Nav) channels. Inhibits the inactivation of Nav on DRG neurons (EC(50)=1.77 uM) and peak current of cardiac myocytes (IC(50)=0.90 uM). This chain is Mu-theraphotoxin-Cg2a 3, found in Chilobrachys guangxiensis (Chinese earth tiger tarantula).